We begin with the raw amino-acid sequence, 572 residues long: RKTLLTFGLNLSSSVVLTPGDSVGEHLPKSGITFIIGLVVDDIVVIEEHLRIHTKARVLVQFSDIALLYNEFVQAFNNSDGAKHLLFATSLPHWADVDTTSETVRRFHEAVPEVEKWTPLSLLGFATGRLMQRNLQRMDLATSDLLSGLFFNETFITVDDMQYGAYKDAEGVATAEESLSNFGATDISVWSMARALRSDEPVLQDPMSPSMVYTVPNGNALTPAQLDWCGWCRFACADTGSRLTVFLCCIMRNKRDNDNAPKELADPVTLIFTDIESSTAQWATQPELMPDAVATHHSMVRSLIENYDCYEVKTVGDSFMIACKSPFAAVQLAQELQLRFLRLDWGTTVFDEFYREFEERHAEEGDGKYKPPTARLDPEVYRQLWNGLRVRVGIHTGLCDIRYDEVTKGYDYYGQTANTAARTESVGNGGQVLMTCETYHSLSTAERSQFDVTPLGGVPLRGVSEPVEVYQLNAVPGRSFAELRLDRVLDVLDIFGEGTAASTSDYSSTLAELSETAQAIAVSLQSLMGVFTQAQRQGTLMPFCERWRVRCPRKVHPRGTTATVRRLSVALQ.

Topologically, residues 1–225 (RKTLLTFGLN…PNGNALTPAQ (225 aa)) are extracellular. Residues N10, N77, and N152 are each glycosylated (N-linked (GlcNAc...) asparagine). A helical transmembrane segment spans residues 226–251 (LDWCGWCRFACADTGSRLTVFLCCIM). Residues 252-572 (RNKRDNDNAP…TVRRLSVALQ (321 aa)) lie on the Cytoplasmic side of the membrane. In terms of domain architecture, Guanylate cyclase spans 269-424 (TLIFTDIESS…QTANTAARTE (156 aa)). Residues D274 and D317 each contribute to the Mg(2+) site.

This sequence belongs to the adenylyl cyclase class-3 family. Mg(2+) is required as a cofactor.

Its subcellular location is the cell membrane. The catalysed reaction is ATP = 3',5'-cyclic AMP + diphosphate. Functionally, could act as a receptor for an unknown ligand. The protein is Receptor-type adenylate cyclase GRESAG 4.2 (GRESAG 4.2) of Trypanosoma brucei brucei.